The chain runs to 381 residues: Protein YkfC (381 aa).

The region spanning Leu-72 to Leu-337 is the Reverse transcriptase domain. The Mg(2+) site is built by Asp-166, Asp-284, and Asp-285.

It belongs to the bacterial reverse transcriptase family.

The protein is Protein YkfC (ykfC) of Escherichia coli (strain K12).